We begin with the raw amino-acid sequence, 145 residues long: Transcription antitermination protein NusB (145 aa).

Belongs to the NusB family.

In terms of biological role, involved in transcription antitermination. Required for transcription of ribosomal RNA (rRNA) genes. Binds specifically to the boxA antiterminator sequence of the ribosomal RNA (rrn) operons. The chain is Transcription antitermination protein NusB from Geobacter sp. (strain M21).